The chain runs to 493 residues: Growth-regulating factor 8 (493 aa).

The QLQ domain maps to 149–184 (AFSEAQWHELERQRNIYKYMMASVPVPPELLTPFPK). One can recognise a WRC domain in the interval 243 to 287 (DLEPWRCKRTDGKKWRCSRNVIPDQKYCERHTHKSRPRSRKHVES). 2 consecutive short sequence motifs (bipartite nuclear localization signal) follow at residues 248–258 (RCKRTDGKKWR) and 276–283 (KSRPRSRK). The interval 270–302 (CERHTHKSRPRSRKHVESSHQSSHHNDIRTAKN) is disordered. Residues 273–283 (HTHKSRPRSRK) show a composition bias toward basic residues.

It belongs to the GRF family. Predominantly expressed in shoot tips and flowers.

Its subcellular location is the nucleus. Transcription activator that plays a role in the regulation of cell expansion in leaf and cotyledons tissues. Component of a network formed by miR396, the GRFs and their interacting factors (GIFs) acting in the regulation of meristem function, at least partially through the control of cell proliferation. The polypeptide is Growth-regulating factor 8 (GRF8) (Arabidopsis thaliana (Mouse-ear cress)).